The chain runs to 325 residues: Transaldolase (325 aa).

The active-site Schiff-base intermediate with substrate is K125.

This sequence belongs to the transaldolase family. Type 2 subfamily.

It localises to the cytoplasm. The catalysed reaction is D-sedoheptulose 7-phosphate + D-glyceraldehyde 3-phosphate = D-erythrose 4-phosphate + beta-D-fructose 6-phosphate. The protein operates within carbohydrate degradation; pentose phosphate pathway; D-glyceraldehyde 3-phosphate and beta-D-fructose 6-phosphate from D-ribose 5-phosphate and D-xylulose 5-phosphate (non-oxidative stage): step 2/3. In terms of biological role, transaldolase is important for the balance of metabolites in the pentose-phosphate pathway. This is Transaldolase (tal) from Campylobacter jejuni subsp. jejuni serotype O:2 (strain ATCC 700819 / NCTC 11168).